Here is a 1676-residue protein sequence, read N- to C-terminus: MNFQYLVKIVAGSYYNISSSILSKIINSVILAGLYYGFLTALALKTSYILLIRAMVSENQNHKAAATTGLILGQLGQFLSIYYAPLYIAFGRPYTLTVLTLIYFLVNLFGNNLDKNASSFGAYGNKIRTLEILCIFLNNLILQLLNTCIFPSSTLARVVNVYLFRCNNKMVFLISSFSAWLIGQILVLMCCKLVLGRGQNKNSIRALIKKYLVRNSMFFLVVNCLFGSSLFILTIQSLGRIPLPIPTQNLSEISRIEKREEERLKKSGVAKEGKSTEDEEDLSHEKDSFKKEPYSKLENEDEEIEKDIEQAIGTLLFDYKRWTRPFRYIKNNQFEQAVRNEMSQYFFGTQQSDGKSRICFTHPVNLSMFWKGISFLLRDKNYSNKLTRRWVQRNKKKLKSIKSDLVNRIRNLDNTIKIEFGTPRTRLCTCIHENETKQEYVPEEYDPLLAGCYRGRIKKEQAIFQKQENETLTNPLDTLIDVLENNTNTQLFKANPIGKQKISFEEELRKKVPRWSYKLITELEQISYYRNPPDDHDIRTRKAKSLVVFDPSKHPNMETMEDSGNIQNKSSDKTINPQNNLTNSKTRTSENDPDDNTTEKEPKDDKSYSIRYSHQSDFRHGLIKDSMRSLRRKIVITDLFKGNVHSPLFFERRKKKNLFSFSGLLKLKQLFITWSAQKEFWDLKDSKKKLKIKDKKQQETKERIEIAEAWDSFELTQVLRGVLLVIQSSLRKDILLPSLIIIKNLGRILLFQTSEWSHDFEELEKETHVPCTYNGVPLGEKEFPRNWLTEGIQIKILSPFCLKPWNDEKKPLPASENFCFLTIWGQETDHIFGRPRRKPSFFKPILTKLDTSLKKINVVQFFKEKRTPESNIVKEQKVDDLSDNILNEFQFSKREKLEAITNRTNLIKTKLETIAKEKKTVTRDLDKNLSKKSLKQIKFKLVSNLSLFQYFLKLFIQKIYTLFLRNILLISGLLKKILNGEKEQLIDQYCSKNEKIKKVHKKFNFILNRKSKLSTNFSNLSQAYVFYKISQEMANFSVCKLRSILNQQVKAVFVKPEIKESFARYGLIQIQKMDKKNLQLRTRQWKHWLRVNSQHHLSHILWSSFGAKKENWRKKIKRCNKFNKQSLQKGNSKGNSNLDDSKNRNKNNLILNKNKKDNFEKCYRYDVLSSKFIKFEKKKTSLFHRSRISLTRQKQILYHKNMSQNFLFALPKNMLVKNLMGKSERIHIPYIEKDLDRKYLSFENIQFSLKKKVNIESWIPLTSRGNRTKTYNYELLDELELMKFIDQIYKKEKEFLFPCIERNKQIRNSKSKYSFIDWMGLNQKLLKHPVTNLELWFFPEFVSLLNIYKLKPWVLQSQLLLSKLTFNKLSSQQQNQTTTKINTETKNQQKNRVENEENKETENQQNAETKNKQKSKTENEENKETENQQNDESEDDPQLAYIRSFMKKHLLFQLRGESIFKKSGFKNIQILCLLLRLMNQNEMLFSSIQREKLNLHIMPEIGIKDLTLEVLEEIGVPEFLKEKRVNFEPFPLYINKNGKFLIYQLLNMSLVHKIKYPTNNESRNQGVITTQKNNNVASHIPENILSSRRRRELRILMCLNKKKKKCKGTEATNKSFSYKKKCAKIWEEQKSTIEFFIWPNSRFEDLTCMNRYWFYTNNGSRFSMLRIVMYLPLKNY.

A run of 6 helical transmembrane segments spans residues 24–44 (KIIN…ALAL), 70–90 (LILG…YIAF), 93–113 (PYTL…GNNL), 130–150 (LEIL…TCIF), 170–190 (MVFL…VLMC), and 218–238 (FFLV…IQSL). Composition is skewed to basic and acidic residues over residues 264 to 276 (LKKS…GKST) and 283 to 298 (SHEK…SKLE). Disordered stretches follow at residues 264–302 (LKKS…NEDE), 546–610 (LVVF…SYSI), 1123–1151 (NKQS…NLIL), and 1372–1436 (QQQN…SEDD). Over residues 562 to 586 (DSGNIQNKSSDKTINPQNNLTNSKT) the composition is skewed to polar residues. The span at 597-610 (TTEKEPKDDKSYSI) shows a compositional bias: basic and acidic residues. Residues 1123 to 1138 (NKQSLQKGNSKGNSNL) are compositionally biased toward polar residues. Positions 1372–1390 (QQQNQTTTKINTETKNQQK) are enriched in low complexity. Residues 1384–1436 (ETKNQQKNRVENEENKETENQQNAETKNKQKSKTENEENKETENQQNDESEDD) adopt a coiled-coil conformation. Basic and acidic residues-rich tracts occupy residues 1391 to 1402 (NRVENEENKETE) and 1409 to 1426 (TKNK…KETE).

It belongs to the TIC214 family. In terms of assembly, part of the Tic complex.

It localises to the plastid. The protein resides in the chloroplast inner membrane. Functionally, involved in protein precursor import into chloroplasts. May be part of an intermediate translocation complex acting as a protein-conducting channel at the inner envelope. The polypeptide is Protein TIC 214 (Cuscuta obtusiflora (Peruvian dodder)).